The chain runs to 91 residues: Small ribosomal subunit protein uS15 (91 aa).

The protein belongs to the universal ribosomal protein uS15 family. Part of the 30S ribosomal subunit. Forms a bridge to the 50S subunit in the 70S ribosome, contacting the 23S rRNA.

Its function is as follows. One of the primary rRNA binding proteins, it binds directly to 16S rRNA where it helps nucleate assembly of the platform of the 30S subunit by binding and bridging several RNA helices of the 16S rRNA. Forms an intersubunit bridge (bridge B4) with the 23S rRNA of the 50S subunit in the ribosome. The protein is Small ribosomal subunit protein uS15 of Legionella pneumophila (strain Corby).